A 325-amino-acid polypeptide reads, in one-letter code: H-2 class I histocompatibility antigen, Q10 alpha chain (325 aa).

The first 24 residues, 1 to 24 (MGAMAPRTLLLLLAAALAPTQTQA), serve as a signal peptide directing secretion. Residues 25–114 (GSHSMRYFET…LLGYYNQSES (90 aa)) are alpha-1. Residues 25–310 (GSHSMRYFET…PPSTDSIMSH (286 aa)) are Extracellular-facing. An N-linked (GlcNAc...) asparagine glycan is attached at asparagine 110. The interval 115–206 (GSHTIQWMYG…ELGKETLLRT (92 aa)) is alpha-2. Intrachain disulfides connect cysteine 125-cysteine 188 and cysteine 227-cysteine 283. The tract at residues 207–298 (DPPKTHVTHH…GLPEPLTLRW (92 aa)) is alpha-3. An Ig-like C1-type domain is found at 209-297 (PKTHVTHHPG…EGLPEPLTLR (89 aa)). N-linked (GlcNAc...) asparagine glycosylation is present at asparagine 280. The connecting peptide stretch occupies residues 299 to 310 (EPPPSTDSIMSH). A helical membrane pass occupies residues 311–324 (IADLLWPSLKLWWY).

It belongs to the MHC class I family. As to quaternary structure, heterodimer of an alpha chain and a beta chain (beta-2-microglobulin).

Its subcellular location is the membrane. Involved in the presentation of foreign antigens to the immune system. The polypeptide is H-2 class I histocompatibility antigen, Q10 alpha chain (H2-Q10) (Mus musculus (Mouse)).